The primary structure comprises 268 residues: Mesoderm posterior protein 1 (268 aa).

The disordered stretch occupies residues 17-93; sequence AAWGPTRRPP…RQSASEREKL (77 aa). Positions 36-48 are enriched in polar residues; the sequence is LVSSPDSWGSTPA. Low complexity predominate over residues 66–86; it reads APSVGRRGARSSRLGSGQRQS. The region spanning 82 to 136 is the bHLH domain; sequence GQRQSASEREKLRMRTLARALHELRRFLPPSVAPAGQSLTKIETLRLAIRYIGHL. The short motif at 163-167 is the CPLCP element; sequence CPLCP. 2 tandem repeats follow at residues 182–183 and 184–185. Positions 182–185 are 2 X 2 AA tandem repeats of G-Q; sequence GQGQ.

It localises to the nucleus. Functionally, transcription factor. Plays a role in the epithelialization of somitic mesoderm and in the development of cardiac mesoderm. Defines the rostrocaudal patterning of the somites by participating in distinct Notch pathways. In Homo sapiens (Human), this protein is Mesoderm posterior protein 1 (MESP1).